The primary structure comprises 580 residues: G1/S-specific cyclin CLN3 (580 aa).

Positions 454–469 (FTPTSSSSSPSPFNSP) are enriched in low complexity. Disordered regions lie at residues 454 to 498 (FTPT…QNSF) and 546 to 580 (MATA…KKTR). 2 stretches are compositionally biased toward polar residues: residues 470–480 (YKTSSSMTTPD) and 563–580 (TSSV…KKTR).

The protein belongs to the cyclin family.

In terms of biological role, essential for the control of the cell cycle at the G1/S (start) transition. CLN3 may be an upstream activator of the G1 cyclins which directly catalyze start. The polypeptide is G1/S-specific cyclin CLN3 (CLN3) (Saccharomyces cerevisiae (strain ATCC 204508 / S288c) (Baker's yeast)).